The sequence spans 259 residues: Hydroxyacylglutathione hydrolase (259 aa).

Residues H56, H58, D60, H61, H112, D133, and H171 each coordinate Zn(2+).

This sequence belongs to the metallo-beta-lactamase superfamily. Glyoxalase II family. In terms of assembly, monomer. The cofactor is Zn(2+).

It carries out the reaction an S-(2-hydroxyacyl)glutathione + H2O = a 2-hydroxy carboxylate + glutathione + H(+). It functions in the pathway secondary metabolite metabolism; methylglyoxal degradation; (R)-lactate from methylglyoxal: step 2/2. Its function is as follows. Thiolesterase that catalyzes the hydrolysis of S-D-lactoyl-glutathione to form glutathione and D-lactic acid. This is Hydroxyacylglutathione hydrolase from Pseudomonas putida (strain GB-1).